Here is a 556-residue protein sequence, read N- to C-terminus: Urocanate hydratase (556 aa).

Residues 53–54, Gln131, 177–179, Glu197, 243–244, 264–268, 274–275, and Tyr323 each bind NAD(+); these read GG, GMG, NA, QTSAH, and YL. Residue Cys411 is part of the active site. Gly493 lines the NAD(+) pocket.

It belongs to the urocanase family. It depends on NAD(+) as a cofactor.

The protein resides in the cytoplasm. It carries out the reaction 4-imidazolone-5-propanoate = trans-urocanate + H2O. It participates in amino-acid degradation; L-histidine degradation into L-glutamate; N-formimidoyl-L-glutamate from L-histidine: step 2/3. Catalyzes the conversion of urocanate to 4-imidazolone-5-propionate. The sequence is that of Urocanate hydratase from Pseudomonas fluorescens (strain SBW25).